The chain runs to 448 residues: Adenosylhomocysteinase (448 aa).

The substrate site is built by threonine 61, aspartate 136, and glutamate 161. Residue 162–164 (TTA) participates in NAD(+) binding. Substrate-binding residues include lysine 191 and aspartate 195. Residues asparagine 196, 225-230 (GYGDVG), glutamate 248, asparagine 283, 304-306 (IGH), and asparagine 360 contribute to the NAD(+) site.

The protein belongs to the adenosylhomocysteinase family. It depends on NAD(+) as a cofactor.

The protein localises to the cytoplasm. The enzyme catalyses S-adenosyl-L-homocysteine + H2O = L-homocysteine + adenosine. The protein operates within amino-acid biosynthesis; L-homocysteine biosynthesis; L-homocysteine from S-adenosyl-L-homocysteine: step 1/1. In terms of biological role, may play a key role in the regulation of the intracellular concentration of adenosylhomocysteine. The protein is Adenosylhomocysteinase of Rhodopirellula baltica (strain DSM 10527 / NCIMB 13988 / SH1).